We begin with the raw amino-acid sequence, 211 residues long: tRNA (guanine-N(7)-)-methyltransferase (211 aa).

Glutamate 44, aspartate 69, aspartate 96, and aspartate 118 together coordinate S-adenosyl-L-methionine. The active site involves aspartate 118. Lysine 122 is a binding site for substrate. Residues 124-129 form an interaction with RNA region; the sequence is RHEKRR. Residues aspartate 154 and 191–194 each bind substrate; that span reads TEYE.

It belongs to the class I-like SAM-binding methyltransferase superfamily. TrmB family.

The catalysed reaction is guanosine(46) in tRNA + S-adenosyl-L-methionine = N(7)-methylguanosine(46) in tRNA + S-adenosyl-L-homocysteine. Its pathway is tRNA modification; N(7)-methylguanine-tRNA biosynthesis. Its function is as follows. Catalyzes the formation of N(7)-methylguanine at position 46 (m7G46) in tRNA. This is tRNA (guanine-N(7)-)-methyltransferase from Streptococcus pneumoniae (strain CGSP14).